Reading from the N-terminus, the 176-residue chain is Adenine phosphoribosyltransferase (176 aa).

Belongs to the purine/pyrimidine phosphoribosyltransferase family. Homodimer.

It localises to the cytoplasm. It carries out the reaction AMP + diphosphate = 5-phospho-alpha-D-ribose 1-diphosphate + adenine. The protein operates within purine metabolism; AMP biosynthesis via salvage pathway; AMP from adenine: step 1/1. In terms of biological role, catalyzes a salvage reaction resulting in the formation of AMP, that is energically less costly than de novo synthesis. This is Adenine phosphoribosyltransferase from Gluconacetobacter diazotrophicus (strain ATCC 49037 / DSM 5601 / CCUG 37298 / CIP 103539 / LMG 7603 / PAl5).